Consider the following 360-residue polypeptide: Abhydrolase domain-containing protein lid-1 (360 aa).

The AB hydrolase-1 domain maps to 73 to 203; that stretch reads AIVFIPGLGA…MSFLGGVAGY (131 aa).

The protein belongs to the peptidase S33 family. ABHD4/ABHD5 subfamily. In terms of assembly, interacts with atgl-1.

It is found in the lipid droplet. Acts coordinately with atgl-1 within the lipolytic cascade to distribute stored energy to tissues during nutritional deprivation. In Caenorhabditis elegans, this protein is Abhydrolase domain-containing protein lid-1.